The chain runs to 426 residues: Kynureninase (426 aa).

Pyridoxal 5'-phosphate contacts are provided by residues Leu-110, Ser-111, 138–141 (FPSD), Asp-223, His-226, and Tyr-248. Position 249 is an N6-(pyridoxal phosphate)lysine (Lys-249). Residues Trp-279 and Asn-307 each coordinate pyridoxal 5'-phosphate.

This sequence belongs to the kynureninase family. Homodimer. Pyridoxal 5'-phosphate serves as cofactor.

The catalysed reaction is L-kynurenine + H2O = anthranilate + L-alanine + H(+). It catalyses the reaction 3-hydroxy-L-kynurenine + H2O = 3-hydroxyanthranilate + L-alanine + H(+). It participates in amino-acid degradation; L-kynurenine degradation; L-alanine and anthranilate from L-kynurenine: step 1/1. The protein operates within cofactor biosynthesis; NAD(+) biosynthesis; quinolinate from L-kynurenine: step 2/3. Its function is as follows. Catalyzes the cleavage of L-kynurenine (L-Kyn) and L-3-hydroxykynurenine (L-3OHKyn) into anthranilic acid (AA) and 3-hydroxyanthranilic acid (3-OHAA), respectively. The protein is Kynureninase of Myxococcus xanthus (strain DK1622).